The primary structure comprises 465 residues: Cysteine--tRNA ligase (465 aa).

A Zn(2+)-binding site is contributed by Cys29. Positions Pro31 to Asn41 match the 'HIGH' region motif. 3 residues coordinate Zn(2+): Cys209, His234, and Glu238. The 'KMSKS' region signature appears at Lys266–Ser270. Position 269 (Lys269) interacts with ATP. Residue Ser270 is modified to Phosphoserine.

This sequence belongs to the class-I aminoacyl-tRNA synthetase family. In terms of assembly, monomer. Zn(2+) is required as a cofactor.

It is found in the cytoplasm. It carries out the reaction tRNA(Cys) + L-cysteine + ATP = L-cysteinyl-tRNA(Cys) + AMP + diphosphate. The sequence is that of Cysteine--tRNA ligase from Bacillus cereus (strain G9842).